The sequence spans 205 residues: Inactive ribonuclease-like protein 9 (205 aa).

The first 26 residues, methionine 1–phenylalanine 26, serve as a signal peptide directing secretion. 3 cysteine pairs are disulfide-bonded: cysteine 98–cysteine 153, cysteine 116–cysteine 168, and cysteine 123–cysteine 130. Asparagine 131 and asparagine 143 each carry an N-linked (GlcNAc...) asparagine glycan.

This sequence belongs to the pancreatic ribonuclease family.

The protein localises to the secreted. Does not exhibit any ribonuclease activity. This chain is Inactive ribonuclease-like protein 9 (RNASE9), found in Pan troglodytes (Chimpanzee).